The primary structure comprises 199 residues: SCO2-like protein RC0042 (199 aa).

Belongs to the SCO1/2 family.

The sequence is that of SCO2-like protein RC0042 from Rickettsia conorii (strain ATCC VR-613 / Malish 7).